We begin with the raw amino-acid sequence, 675 residues long: G-protein-signaling modulator 1 (675 aa).

Residues 1 to 509 form a mediates association with membranes region; the sequence is MAGPAPPVAD…DLLTKFQSSR (509 aa). TPR repeat units lie at residues 28 to 61, 66 to 99, 106 to 139, 146 to 181, 183 to 202, 209 to 242, 249 to 282, 289 to 322, and 329 to 362; these read CLEL…GTED, SAIY…ARTI, AKAS…AQEQ, ARAL…PPDV, ETLC…VKEL, GRAY…AKEF, RRAY…SRQL, AQAC…AQEL, and GRAC…SQEI. Positions 364-487 are interaction with STK11/LKB1; sequence DRHGELTARM…VRVHVPRTSI (124 aa). The interval 391–412 is disordered; it reads SEKPDLAGYEAQGARPKRTQRL. At serine 413 the chain carries Phosphoserine. Omega-N-methylarginine is present on arginine 421. Residues 424–442 are compositionally biased toward basic and acidic residues; sequence LEREQNGDSHHSGDWRGPS. Positions 424 to 492 are disordered; it reads LEREQNGDSH…PRTSIPRAPS (69 aa). Phosphoserine occurs at positions 445, 469, 471, 492, and 493. Basic and acidic residues predominate over residues 454–469; sequence KYQEGPDAERRPREGS. A GoLoco 1 domain is found at 495-517; it reads EECFFDLLTKFQSSRMDDQRCPL. A phosphoserine mark is found at serine 545 and serine 569. GoLoco domains are found at residues 548 to 570, 596 to 618, and 630 to 652; these read TEEF…RASV, GDDF…RCPP, and DEDF…RVDL. 2 disordered regions span residues 610 to 630 and 644 to 675; these read RIDD…TMPD and RMDE…PGAS.

The protein belongs to the GPSM family. Interacts with GNAI1, GNAI2 and GNAI3 preferentially in their GDP-bound state. May also interact with GNAO1. Interacts with STK11/LKB1 and MACF1. Interacts with INSC/inscuteable and FRMPD1. Post-translationally, phosphorylation regulates interaction with G(i/o) alpha. In terms of tissue distribution, expressed in intestinal cells.

It localises to the cytoplasm. Its subcellular location is the cytosol. It is found in the endoplasmic reticulum membrane. The protein resides in the golgi apparatus membrane. The protein localises to the cell membrane. Functionally, guanine nucleotide dissociation inhibitor (GDI) which functions as a receptor-independent activator of heterotrimeric G-protein signaling. Keeps G(i/o) alpha subunit in its GDP-bound form thus uncoupling heterotrimeric G-proteins signaling from G protein-coupled receptors. Controls spindle orientation and asymmetric cell fate of cerebral cortical progenitors. May also be involved in macroautophagy in intestinal cells. May play a role in drug addiction. This Homo sapiens (Human) protein is G-protein-signaling modulator 1 (GPSM1).